The chain runs to 214 residues: MASLFKKKTVDDIIKDQNKELKGQQRAITRDRTALEKQEKQLEMEIKKMAKAGNKDACKVLAKQLVQLRKQKTRTYAVSSKVTSMSTQTKVMSSQMKMAGAMSTTAKTMQAVNKKMDPQKTLQTMQNFQKENMKMEMTEEMINDTLDDIFDASEDEEESQDIVNQVLDEIGIEISGKMAKAPSAAKGLPSASASKSTGISDEEIERQLKALGVD.

A coiled-coil region spans residues 25–55; that stretch reads QRAITRDRTALEKQEKQLEMEIKKMAKAGNK. Residues 178 to 214 form a disordered region; sequence MAKAPSAAKGLPSASASKSTGISDEEIERQLKALGVD. The MIT-interacting motif motif lies at 202 to 212; it reads EEIERQLKALG.

The protein belongs to the SNF7 family. In terms of assembly, probable core component of the endosomal sorting required for transport complex III (ESCRT-III). ESCRT-III components are thought to multimerize to form a flat lattice on the perimeter membrane of the endosome.

It is found in the cytoplasm. The protein localises to the cytosol. The protein resides in the late endosome membrane. In terms of biological role, probable core component of the endosomal sorting required for transport complex III (ESCRT-III) which is involved in multivesicular bodies (MVBs) formation and sorting of endosomal cargo proteins into MVBs. MVBs contain intraluminal vesicles (ILVs) that are generated by invagination and scission from the limiting membrane of the endosome and mostly are delivered to lysosomes enabling degradation of membrane proteins, such as stimulated growth factor receptors, lysosomal enzymes and lipids. In Xenopus laevis (African clawed frog), this protein is Charged multivesicular body protein 2b-A (chmp2b-a).